Here is a 346-residue protein sequence, read N- to C-terminus: Methylthioribose-1-phosphate isomerase (346 aa).

Residues Arg48–Ala50, Arg88, and Gln192 contribute to the substrate site. Catalysis depends on Asp233, which acts as the Proton donor. Position 243–244 (Asn243–Lys244) interacts with substrate.

The protein belongs to the eIF-2B alpha/beta/delta subunits family. MtnA subfamily.

It catalyses the reaction 5-(methylsulfanyl)-alpha-D-ribose 1-phosphate = 5-(methylsulfanyl)-D-ribulose 1-phosphate. Its pathway is amino-acid biosynthesis; L-methionine biosynthesis via salvage pathway; L-methionine from S-methyl-5-thio-alpha-D-ribose 1-phosphate: step 1/6. Functionally, catalyzes the interconversion of methylthioribose-1-phosphate (MTR-1-P) into methylthioribulose-1-phosphate (MTRu-1-P). The chain is Methylthioribose-1-phosphate isomerase from Alcanivorax borkumensis (strain ATCC 700651 / DSM 11573 / NCIMB 13689 / SK2).